The primary structure comprises 432 residues: Bifunctional IPC transferase and DIPP synthase (432 aa).

Positions 3-225 (PERAVILAAG…RARRMLVRTA (223 aa)) are mobA-like NTP transferase. CTP-binding positions include 9-11 (LAA), lysine 22, and glutamate 113. Mg(2+) is bound at residue glutamate 113. Residues 226–426 (VKGTGDGFVS…LTLYFVVKKV (201 aa)) form a CDP-alcohol phosphatidyltransferases region. 3 helical membrane-spanning segments follow: residues 264–284 (FLLG…AGIL), 337–356 (IWYF…SYST), and 385–405 (VFLT…ALFL).

The protein in the N-terminal section; belongs to the MobA family. This sequence in the C-terminal section; belongs to the CDP-alcohol phosphatidyltransferase class-I family. Mg(2+) serves as cofactor.

The protein localises to the membrane. It carries out the reaction 1D-myo-inositol 3-phosphate + CTP + H(+) = CDP-1L-myo-inositol + diphosphate. The enzyme catalyses CDP-1L-myo-inositol + 1D-myo-inositol 3-phosphate = bis(1L-myo-inositol) 3,1'-phosphate 1-phosphate + CMP + H(+). In terms of biological role, involved in biosynthesis of di-myo-inositol phosphate (DIP), a widespread organic solute in microorganisms adapted to hot environments. Catalyzes the condensation of CTP and L-myo-inositol-1-phosphate into CDP-L-myo-inositol, as well as the biosynthesis of di-myo-inositol-1,3'-phosphate-1'-phosphate (DIPP) from CDP-L-myo-inositol and L-myo-inositol-1-phosphate. The chain is Bifunctional IPC transferase and DIPP synthase from Thermococcus kodakarensis (strain ATCC BAA-918 / JCM 12380 / KOD1) (Pyrococcus kodakaraensis (strain KOD1)).